The sequence spans 318 residues: Taste receptor type 2 member 7 (318 aa).

The Extracellular segment spans residues 1 to 9; it reads MTDKVQTTL. Residues 10–30 form a helical membrane-spanning segment; that stretch reads LFLAIGEFSVGILGNAFIGLV. Residues 31 to 55 are Cytoplasmic-facing; that stretch reads NCMDWVKKRKIASIDLILTSLAISR. The helical transmembrane segment at 56 to 76 threads the bilayer; the sequence is ICLLCVILLDCFMLVLYPDVY. Over 77–94 the chain is Extracellular; that stretch reads ATGKQMRIIDFFWTLTNH. The chain crosses the membrane as a helical span at residues 95 to 115; the sequence is LSIWFATCLSIYYFFKIANFF. Topologically, residues 116-128 are cytoplasmic; it reads HPLFLWMKWRIDR. Residues 129–149 traverse the membrane as a helical segment; that stretch reads VISWILLGCMVLSVFINLPAT. Topologically, residues 150–187 are extracellular; sequence ENLNADFRRCVKAKRKTNLTWSCRVTKAQHASTKLFLN. N-linked (GlcNAc...) asparagine glycosylation is present at Asn-167. A helical transmembrane segment spans residues 188-208; the sequence is LVTLLPFSVCLMSFFLLILSL. At 209 to 235 the chain is on the cytoplasmic side; it reads WRHIRRMQLSATGCRDPSTEAHVRALK. The helical transmembrane segment at 236–256 threads the bilayer; that stretch reads AVISFLLLFIAYYLSFLIATS. At 257-266 the chain is on the extracellular side; the sequence is SYFIPETELA. Residues 267–287 form a helical membrane-spanning segment; sequence VIFGEFIALIYPSSHSFILIL. The Cytoplasmic portion of the chain corresponds to 288–318; that stretch reads GNSKLRRASLKVLWTVMSILKGRKFQQHKQI.

This sequence belongs to the G-protein coupled receptor T2R family.

Its subcellular location is the membrane. Functionally, gustducin-coupled receptor implicated in the perception of bitter compounds in the oral cavity and the gastrointestinal tract. Signals through PLCB2 and the calcium-regulated cation channel TRPM5. The protein is Taste receptor type 2 member 7 (TAS2R7) of Macaca mulatta (Rhesus macaque).